Here is a 750-residue protein sequence, read N- to C-terminus: Iron-sulfur clusters transporter ATM1, mitochondrial (750 aa).

A mitochondrion-targeting transit peptide spans 1 to 16; that stretch reads MFIRNVKLIKPSPVRF. The Mitochondrial matrix segment spans residues 17-124; the sequence is ISPIPFSFPI…PKNNLNFKIR (108 aa). Low complexity-rich tracts occupy residues 43–75 and 87–100; these read TSNF…KTLS and DNDT…SSEN. A disordered region spans residues 43–100; that stretch reads TSNFKSTSSSSSLKSTSTSTSTSTSKTTPKTLSKPPPKVKPPIQDNDTTSSGSSSSEN. Residues 125–146 traverse the membrane as a helical segment; it reads VIIALSLLVGAKILNVQVPFYF. The 291-residue stretch at 125 to 415 folds into the ABC transmembrane type-1 domain; sequence VIIALSLLVG…LGSVYRELKQ (291 aa). Residues 147-169 are Mitochondrial intermembrane-facing; the sequence is KQIIDTMNIDWTNEVGVFSTVIG. The chain crosses the membrane as a helical span at residues 170 to 193; the sequence is SLILAYGGARFGAVLFGELRNAIF. Residues 194–242 lie on the Mitochondrial matrix side of the membrane; that stretch reads ASVAQSAIRRVAYNTFVKLLNMDLQFHLSRQTGGLTRAIDRGTKGISYV. A helical membrane pass occupies residues 243-266; the sequence is LSAMVFHIIPITLEISIVCGILTY. Asn267 is a topological domain (mitochondrial intermembrane). The chain crosses the membrane as a helical span at residues 268–288; it reads YGASFAAMTFVTMLAYSIFTI. Topologically, residues 289–354 are mitochondrial matrix; that stretch reads QTTAWRTKFR…SSVKIATSLA (66 aa). Glutathione contacts are provided by residues 294-298 and 357-360; these read RTKFR and NSGQ. A helical membrane pass occupies residues 355 to 373; that stretch reads FLNSGQNFIFTSALTAMMY. The Mitochondrial intermembrane portion of the chain corresponds to 374-388; the sequence is MGCQGVYTGELTVGD. A helical membrane pass occupies residues 389–410; it reads LVLINQLVFQLSVPLNFLGSVY. Gly407 serves as a coordination point for glutathione. The Mitochondrial matrix portion of the chain corresponds to 411–750; the sequence is RELKQSLLDM…LFNSQTFEKK (340 aa). The segment at 437–462 is disordered; that stretch reads PNAPPLKLNNNNNNNNNNNNNNNNSL. Residues 445–460 show a composition bias toward low complexity; the sequence is NNNNNNNNNNNNNNNN. Residues 466–702 form the ABC transporter domain; that stretch reads IRFENVSFGY…QPNSLYAQLW (237 aa). ATP-binding positions include Tyr475 and 499–510; that span reads GPSGSGKSTILR.

This sequence belongs to the ABC transporter superfamily. ABCB family. Heavy Metal importer (TC 3.A.1.210) subfamily. In terms of assembly, homodimer.

Its subcellular location is the mitochondrion inner membrane. In terms of biological role, performs an essential function in the generation of cytoplasmic iron-sulfur proteins by mediating the ATP-dependent export of Fe/S cluster precursors synthesized by NFS1 and other mitochondrial proteins. Hydrolyzes ATP. Binds glutathione and may function by transporting a glutathione-conjugated iron-sulfur compound. In Candida albicans (strain SC5314 / ATCC MYA-2876) (Yeast), this protein is Iron-sulfur clusters transporter ATM1, mitochondrial.